The sequence spans 442 residues: UDP-glycosyltransferase 79B7 (442 aa).

UDP-alpha-D-glucose is bound by residues serine 260, 319-321, 336-344, and 358-361; these read VQQ, HCGPGTIWE, and LSDQ.

This sequence belongs to the UDP-glycosyltransferase family.

The protein is UDP-glycosyltransferase 79B7 (UGT79B7) of Arabidopsis thaliana (Mouse-ear cress).